A 295-amino-acid chain; its full sequence is GDP-polyphosphate phosphotransferase (295 aa).

The segment at 1 to 28 (MDIPSVDVSTATNDGASSRAKGHRSAAP) is disordered. Positions 7-16 (DVSTATNDGA) are enriched in polar residues. Histidine 115 and histidine 247 each carry phosphohistidine.

This sequence belongs to the polyphosphate kinase 2 (PPK2) family. Class I subfamily. In terms of assembly, interacts with Ndk. Post-translationally, autophosphorylated at His-115 and His-247 using polyP as a phosphate donor.

It catalyses the reaction [phosphate](n) + GTP = [phosphate](n+1) + GDP. Its function is as follows. Uses inorganic polyphosphate (polyP) as a donor to convert GDP to GTP. In addition, modulates nucleotide triphosphate synthesis catalyzed by the nucleoside diphosphate kinase (Ndk) in favor of GTP production over CTP or UTP. Plays an important role in survival of M.tuberculosis in macrophages. This chain is GDP-polyphosphate phosphotransferase, found in Mycobacterium tuberculosis (strain ATCC 25618 / H37Rv).